Reading from the N-terminus, the 164-residue chain is MILILTIIVGFLIYFVTAKRFKLKRLILSICFKTIYNVFKKWWLKFSEEGLKTIVFKRLSKFLKQPYYCNNNVVEYEFHNKKYKLMVNQSLIKKPSYFILNCKEGTGKKEDITLKLQPWIGPEHNFHNTLIKPSDLGYKKLIVVFSIGNKVVVNENDFLPTKLT.

The signal sequence occupies residues 1–18 (MILILTIIVGFLIYFVTA). Residue N88 is glycosylated (N-linked (GlcNAc...) asparagine; by host).

This sequence belongs to the IIV-6 357R family.

This is an uncharacterized protein from Acheta domesticus (House cricket).